The primary structure comprises 231 residues: UPF0702 transmembrane protein YetF (231 aa).

The next 3 membrane-spanning stretches (helical) occupy residues 5–25, 33–53, and 59–79; these read LSVAVELVCGLGILFIILKLL, ITPFDFISALILGELVGNAVY, and IKEIIFASLLWGVLIYIIEFI.

This sequence belongs to the UPF0702 family.

The protein resides in the cell membrane. The polypeptide is UPF0702 transmembrane protein YetF (yetF) (Bacillus subtilis (strain 168)).